Consider the following 532-residue polypeptide: Berberine bridge enzyme-like 23 (532 aa).

The first 22 residues, 1–22 (MRTLEAFALSLFLVFLVKWVNS), serve as a signal peptide directing secretion. Cys36 and Cys102 are oxidised to a cystine. An N-linked (GlcNAc...) asparagine glycan is attached at Asn78. Residues 80-256 (TSQKPILIVT…LSWKVKLVRV (177 aa)) enclose the FAD-binding PCMH-type domain. Residues 117-180 (HDYEGLSYLS…KIHGFPAGTC (64 aa)) constitute a cross-link (6-(S-cysteinyl)-8alpha-(pros-histidyl)-FAD (His-Cys)). Residues Asn272 and Asn487 are each glycosylated (N-linked (GlcNAc...) asparagine).

Belongs to the oxygen-dependent FAD-linked oxidoreductase family. FAD is required as a cofactor. In terms of processing, the FAD cofactor is bound via a bicovalent 6-S-cysteinyl, 8alpha-N1-histidyl FAD linkage. Accumulates in cell walls of etiolated hypocotyls.

The protein resides in the secreted. The protein localises to the cell wall. The polypeptide is Berberine bridge enzyme-like 23 (Arabidopsis thaliana (Mouse-ear cress)).